Reading from the N-terminus, the 341-residue chain is Methionine import ATP-binding protein MetN (341 aa).

One can recognise an ABC transporter domain in the interval 9–247 (ISVEQLNKEI…PQSAITEELF (239 aa)). 41 to 48 (GHSGSGKS) serves as a coordination point for ATP.

This sequence belongs to the ABC transporter superfamily. Methionine importer (TC 3.A.1.24) family. In terms of assembly, the complex is composed of two ATP-binding proteins (MetN), two transmembrane proteins (MetI) and a solute-binding protein (MetQ).

The protein localises to the cell inner membrane. The enzyme catalyses L-methionine(out) + ATP + H2O = L-methionine(in) + ADP + phosphate + H(+). The catalysed reaction is D-methionine(out) + ATP + H2O = D-methionine(in) + ADP + phosphate + H(+). Functionally, part of the ABC transporter complex MetNIQ involved in methionine import. Responsible for energy coupling to the transport system. In Chlamydia abortus (strain DSM 27085 / S26/3) (Chlamydophila abortus), this protein is Methionine import ATP-binding protein MetN.